The sequence spans 294 residues: NAD kinase (294 aa).

Asp73 serves as the catalytic Proton acceptor. NAD(+) contacts are provided by residues 73-74, 147-148, His158, Arg175, Asp177, and 188-193; these read DG, NE, and TAYALS.

It belongs to the NAD kinase family. A divalent metal cation is required as a cofactor.

Its subcellular location is the cytoplasm. It carries out the reaction NAD(+) + ATP = ADP + NADP(+) + H(+). Functionally, involved in the regulation of the intracellular balance of NAD and NADP, and is a key enzyme in the biosynthesis of NADP. Catalyzes specifically the phosphorylation on 2'-hydroxyl of the adenosine moiety of NAD to yield NADP. This Tolumonas auensis (strain DSM 9187 / NBRC 110442 / TA 4) protein is NAD kinase.